A 237-amino-acid chain; its full sequence is Thiamine-phosphate synthase (237 aa).

4-amino-2-methyl-5-(diphosphooxymethyl)pyrimidine is bound by residues 57–61 (QLRDK) and Asn98. Residues Asp99 and Asp118 each coordinate Mg(2+). Residue Ser136 participates in 4-amino-2-methyl-5-(diphosphooxymethyl)pyrimidine binding. 162–164 (TPT) is a binding site for 2-[(2R,5Z)-2-carboxy-4-methylthiazol-5(2H)-ylidene]ethyl phosphate. 4-amino-2-methyl-5-(diphosphooxymethyl)pyrimidine is bound at residue Lys165. 2-[(2R,5Z)-2-carboxy-4-methylthiazol-5(2H)-ylidene]ethyl phosphate is bound at residue Gly193.

The protein belongs to the thiamine-phosphate synthase family. Requires Mg(2+) as cofactor.

It carries out the reaction 2-[(2R,5Z)-2-carboxy-4-methylthiazol-5(2H)-ylidene]ethyl phosphate + 4-amino-2-methyl-5-(diphosphooxymethyl)pyrimidine + 2 H(+) = thiamine phosphate + CO2 + diphosphate. It catalyses the reaction 2-(2-carboxy-4-methylthiazol-5-yl)ethyl phosphate + 4-amino-2-methyl-5-(diphosphooxymethyl)pyrimidine + 2 H(+) = thiamine phosphate + CO2 + diphosphate. The enzyme catalyses 4-methyl-5-(2-phosphooxyethyl)-thiazole + 4-amino-2-methyl-5-(diphosphooxymethyl)pyrimidine + H(+) = thiamine phosphate + diphosphate. The protein operates within cofactor biosynthesis; thiamine diphosphate biosynthesis; thiamine phosphate from 4-amino-2-methyl-5-diphosphomethylpyrimidine and 4-methyl-5-(2-phosphoethyl)-thiazole: step 1/1. Its function is as follows. Condenses 4-methyl-5-(beta-hydroxyethyl)thiazole monophosphate (THZ-P) and 2-methyl-4-amino-5-hydroxymethyl pyrimidine pyrophosphate (HMP-PP) to form thiamine monophosphate (TMP). This Mycolicibacterium gilvum (strain PYR-GCK) (Mycobacterium gilvum (strain PYR-GCK)) protein is Thiamine-phosphate synthase.